The following is a 108-amino-acid chain: UPF0145 protein HDEF_1024 (108 aa).

It belongs to the UPF0145 family.

This is UPF0145 protein HDEF_1024 from Hamiltonella defensa subsp. Acyrthosiphon pisum (strain 5AT).